We begin with the raw amino-acid sequence, 583 residues long: MSATKPRLRSTQWFGTNDKNGFMYRSWMKNQGIPDHEFDGRPIIGICNTWSELTPCNAHFRKLAEHVKRGISEAGGFPVEFPVFSNGESNLRPSAMLTRNLASMDVEEAIRGNPIDAVVLLAGCDKTTPALLMGAASCDVPAIVVSGGPMLNGKLEGKNIGSGTAVWQLHEALKAGEIDVHHFLSAEAGMSRSAGTCNTMGTASTMACMAEALGVALPHNAAIPAVDSRRYVLAHMSGIRIVEMALEGLVLSKILTRAAFENAIRANAAIGGSTNAVIHLKAIAGRIGVPLELEDWMRIGRDTPTIVDLMPSGRFPMEEFYYAGGLPAVLRRLGEGGLLPNPDALTVNGKSLWDNVREAPNYDEEVIRPLDRPLIADGGIRILRGNLAPRGAVLKPSAASPELLKHRGRAVVFENLDHYKATINDEALDIDASSVMVLKNCGPRGYPGMAEVGNMGLPPKLLRQGVKDMVRISDARMSGTAYGTVVLHVAPEAAAGGPLAAVRNGDWIELDCEAGTLHLDITDDELHRRLSDVDPTAAPGVAGQLGKGGYARLYIDHVLQADEGCDLDFLVGTRGAEVPSHSH.

Cys56, Cys124, and Cys197 together coordinate [4Fe-4S] cluster.

This sequence belongs to the IlvD/Edd family. In terms of assembly, homodimer. The cofactor is [4Fe-4S] cluster.

It carries out the reaction L-arabinonate = 2-dehydro-3-deoxy-L-arabinonate + H2O. Activity is enhanced by Mg(2+), being optimal with a concentration of 1-10 mM Mg(2+). Catalyzes the dehydration of L-arabonate to L-2-keto-3-deoxyarabonate (L-KDA). Is involved in a degradation pathway of L-arabinose that allows A.brasilense to grow on L-arabinose as a sole carbon source. To a lesser extent, can also use D-xylonate as substrate, but not D-galactonate, D-arabonate, and D-gluconate. This chain is L-arabonate dehydratase (araC), found in Azospirillum brasilense.